Reading from the N-terminus, the 1235-residue chain is Serine/threonine-protein kinase TAO2 (1235 aa).

S9 bears the Phosphoserine mark. In terms of domain architecture, Protein kinase spans 28–281 (FSDLREIGHG…SEVLLKHRFV (254 aa)). ATP contacts are provided by residues 34-42 (IGHGSFGAV) and K57. 106-108 (EYC) serves as a coordination point for staurosporine. Residue D151 is the Proton acceptor of the active site. Residue G155 coordinates staurosporine. Phosphoserine is present on S181. Residues 318 to 457 (QEAPNGPGAE…PTSTSSSSAR (140 aa)) are disordered. Residues 350-374 (SSHSVPSMSISASSQSSSVNSLADA) show a composition bias toward low complexity. Over residues 375–395 (SDNEEEEEEEEEEEEEEEEEG) the composition is skewed to acidic residues. A compositionally biased stretch (basic and acidic residues) spans 396–411 (PESREMAMMQEGEHTV). Phosphoserine is present on S416. Coiled-coil stretches lie at residues 488 to 523 (SALR…EEHS) and 576 to 603 (KELA…LQEN). Position 658 is a phosphoserine (S658). Positions 683 to 715 (LRQHEATRELELRQLQAVQRTRAELTRLQHQTE) form a coiled coil. Residues S777, S825, and S827 each carry the phosphoserine modification. Residues 892–941 (GPVLTPVPEEEEEEEEEGGAPIGTPRDPGDGCPSPDIPPEPPPSHLRQYP) are disordered. Residues 899-909 (PEEEEEEEEEG) show a composition bias toward acidic residues. The span at 926–935 (PDIPPEPPPS) shows a compositional bias: pro residues. 3 helical membrane passes run 967–987 (LLPL…GGGL), 989–1009 (AALL…LFLC), and 1014–1034 (LPPS…VLSL). R1038 carries the phosphoserine modification. A run of 2 helical transmembrane segments spans residues 1040-1060 (LMGV…SLAL) and 1170-1190 (LASC…LLKG). Residues 1210 to 1235 (SASRQLPPGTVAGRRSQTRRALPPWR) are disordered.

This sequence belongs to the protein kinase superfamily. STE Ser/Thr protein kinase family. STE20 subfamily. Self-associates. Interacts with MAP2K3 and MAP2K6. Interacts with tubulins. Interacts with MAP3K7 and interferes with MAP3K7-binding to CHUK and thus prevents NF-kappa-B activation. Isoform 2 interacts with PCDH8; this complex may also include CDH2. Requires Mg(2+) as cofactor. Autophosphorylated. Phosphorylated by ATM. In terms of processing, phosphorylated on Ser-1038 by MAPK14. This phosphorylation is required PCDH8 for endocytosis.

Its subcellular location is the cytoplasmic vesicle membrane. The protein localises to the cytoplasm. It is found in the cytoskeleton. The protein resides in the cell projection. It localises to the dendrite. The catalysed reaction is L-seryl-[protein] + ATP = O-phospho-L-seryl-[protein] + ADP + H(+). The enzyme catalyses L-threonyl-[protein] + ATP = O-phospho-L-threonyl-[protein] + ADP + H(+). Its activity is regulated as follows. Moderately inhibited by staurosporine, a broad-range protein kinase inhibitor. In terms of biological role, serine/threonine-protein kinase involved in different processes such as membrane blebbing and apoptotic bodies formation DNA damage response and MAPK14/p38 MAPK stress-activated MAPK cascade. Phosphorylates itself, MBP, activated MAPK8, MAP2K3, MAP2K6 and tubulins. Activates the MAPK14/p38 MAPK signaling pathway through the specific activation and phosphorylation of the upstream MAP2K3 and MAP2K6 kinases. In response to DNA damage, involved in the G2/M transition DNA damage checkpoint by activating the p38/MAPK14 stress-activated MAPK cascade, probably by mediating phosphorylation of upstream MAP2K3 and MAP2K6 kinases. May affect microtubule organization and stability. May play a role in the osmotic stress-MAPK8 pathway. Prevents MAP3K7-mediated activation of CHUK, and thus NF-kappa-B activation. Isoform 2, but not isoform 1, is required for PCDH8 endocytosis. Following homophilic interactions between PCDH8 extracellular domains, isoform 2 phosphorylates and activates MAPK14/p38 MAPK which in turn phosphorylates isoform 2. This process leads to PCDH8 endocytosis and CDH2 cointernalization. Both isoforms are involved in MAPK14/p38 MAPK activation. The polypeptide is Serine/threonine-protein kinase TAO2 (Taok2) (Rattus norvegicus (Rat)).